The sequence spans 125 residues: Large-conductance mechanosensitive channel (125 aa).

A run of 2 helical transmembrane segments spans residues 14-34 (VIDL…VQSL) and 67-87 (GSFL…FLIV).

Belongs to the MscL family. As to quaternary structure, homopentamer.

It localises to the cell membrane. In terms of biological role, channel that opens in response to stretch forces in the membrane lipid bilayer. May participate in the regulation of osmotic pressure changes within the cell. This Lactobacillus helveticus (strain DPC 4571) protein is Large-conductance mechanosensitive channel.